Consider the following 353-residue polypeptide: Serine/threonine-protein phosphatase 2A activator 1 (353 aa).

Residues 331-353 (ANNATTKMPPPLSTSTSRFIHRR) are disordered. The span at 343-353 (STSTSRFIHRR) shows a compositional bias: polar residues.

The protein belongs to the PTPA-type PPIase family.

The protein localises to the cytoplasm. The protein resides in the nucleus. The enzyme catalyses [protein]-peptidylproline (omega=180) = [protein]-peptidylproline (omega=0). Its function is as follows. PPIases accelerate the folding of proteins. It catalyzes the cis-trans isomerization of proline imidic peptide bonds in oligopeptides. Acts as a regulatory subunit for PP2A-like phosphatases modulating their activity or substrate specificity, probably by inducing a conformational change in the catalytic subunit, a direct target of the PPIase. Can reactivate inactive phosphatase PP2A-phosphatase methylesterase complexes (PP2Ai) in presence of ATP and Mg(2+) by dissociating the inactive form from the complex. The chain is Serine/threonine-protein phosphatase 2A activator 1 (RRD1) from Kluyveromyces lactis (strain ATCC 8585 / CBS 2359 / DSM 70799 / NBRC 1267 / NRRL Y-1140 / WM37) (Yeast).